Consider the following 449-residue polypeptide: NADP-specific glutamate dehydrogenase (449 aa).

Substrate contacts are provided by Lys-92, Gln-113, and Lys-116. Lys-128 serves as the catalytic Proton donor. Gly-167 lines the substrate pocket. Residues Thr-211 and Asn-242 each coordinate NADP(+). Ser-380 is a binding site for substrate.

This sequence belongs to the Glu/Leu/Phe/Val dehydrogenases family. In terms of assembly, homohexamer.

The enzyme catalyses L-glutamate + NADP(+) + H2O = 2-oxoglutarate + NH4(+) + NADPH + H(+). Its function is as follows. Catalyzes the reversible oxidative deamination of glutamate to alpha-ketoglutarate and ammonia. This Haemophilus influenzae (strain ATCC 51907 / DSM 11121 / KW20 / Rd) protein is NADP-specific glutamate dehydrogenase (gdhA).